The primary structure comprises 1265 residues: Methionine synthase (1265 aa).

The Hcy-binding domain occupies 19 to 338 (QDEIEAILQE…DHIREIAEAV (320 aa)). Positions 260, 323, and 324 each coordinate Zn(2+). The Pterin-binding domain maps to 371-632 (FVNIGERCNV…IHKELLQLCE (262 aa)). (6S)-5,6,7,8-tetrahydrofolate is bound by residues 382–384 (GSR), Asp449, Asn470, Asp537, Asn579, Arg585, and Arg591. Residues 662–759 (QTDEWRNGPL…FMEKEREETK (98 aa)) form the B12-binding N-terminal domain. Methylcob(III)alamin contacts are provided by residues Glu709, 782-786 (GDVHD), His785, Ser830, Thr834, and Ala886. One can recognise a B12-binding domain in the interval 772-907 (QGTIVLATVK…DENLKDEYFE (136 aa)). Residues 923 to 1265 (SLKERRYLTL…LGPILGYDTD (343 aa)) enclose the AdoMet activation domain. S-adenosyl-L-methionine-binding positions include Asp974, Arg1172, and 1227 to 1228 (YF). Thr1264 carries the post-translational modification Phosphothreonine.

Belongs to the vitamin-B12 dependent methionine synthase family. As to quaternary structure, monomer. Dimer. Forms a multiprotein complex with MMACHC, MMADHC and MTRR. Methylcob(III)alamin serves as cofactor. Zn(2+) is required as a cofactor.

It localises to the cytoplasm. It carries out the reaction (6S)-5-methyl-5,6,7,8-tetrahydrofolate + L-homocysteine = (6S)-5,6,7,8-tetrahydrofolate + L-methionine. It participates in amino-acid biosynthesis; L-methionine biosynthesis via de novo pathway; L-methionine from L-homocysteine (MetH route): step 1/1. Catalyzes the transfer of a methyl group from methylcob(III)alamin (MeCbl) to homocysteine, yielding enzyme-bound cob(I)alamin and methionine in the cytosol. MeCbl is an active form of cobalamin (vitamin B12) used as a cofactor for methionine biosynthesis. Cob(I)alamin form is regenerated to MeCbl by a transfer of a methyl group from 5-methyltetrahydrofolate. The processing of cobalamin in the cytosol occurs in a multiprotein complex composed of at least MMACHC, MMADHC, MTRR (methionine synthase reductase) and MTR which may contribute to shuttle safely and efficiently cobalamin towards MTR in order to produce methionine. This Bos taurus (Bovine) protein is Methionine synthase (MTR).